A 207-amino-acid polypeptide reads, in one-letter code: Ion-translocating oxidoreductase complex subunit G (207 aa).

The chain crosses the membrane as a helical span at residues 11 to 31 (GILLGFIALLCTIISAGIFFL). Residue Thr175 is modified to FMN phosphoryl threonine.

This sequence belongs to the RnfG family. As to quaternary structure, the complex is composed of six subunits: RnfA, RnfB, RnfC, RnfD, RnfE and RnfG. FMN is required as a cofactor.

It is found in the cell inner membrane. In terms of biological role, part of a membrane-bound complex that couples electron transfer with translocation of ions across the membrane. The chain is Ion-translocating oxidoreductase complex subunit G from Haemophilus influenzae (strain ATCC 51907 / DSM 11121 / KW20 / Rd).